The primary structure comprises 367 residues: uncharacterized protein (367 aa).

The interval 333 to 367 (RERRPTLNAQRAHAAAQQQPRRRNRRQQGTGASAS) is disordered. The span at 341–351 (AQRAHAAAQQQ) shows a compositional bias: low complexity.

This is an uncharacterized protein from Amazona oratrix (yellow-headed parrot).